Reading from the N-terminus, the 362-residue chain is Cobalt-precorrin-5B C(1)-methyltransferase (362 aa).

This sequence belongs to the CbiD family.

It catalyses the reaction Co-precorrin-5B + S-adenosyl-L-methionine = Co-precorrin-6A + S-adenosyl-L-homocysteine. Its pathway is cofactor biosynthesis; adenosylcobalamin biosynthesis; cob(II)yrinate a,c-diamide from sirohydrochlorin (anaerobic route): step 6/10. Catalyzes the methylation of C-1 in cobalt-precorrin-5B to form cobalt-precorrin-6A. This chain is Cobalt-precorrin-5B C(1)-methyltransferase, found in Burkholderia ambifaria (strain MC40-6).